Consider the following 146-residue polypeptide: Fluoride-specific ion channel FluC (146 aa).

The next 4 membrane-spanning stretches (helical) occupy residues 8–28 (FAIA…TLTV), 47–67 (LANL…QALV), 91–111 (IGVL…AVFA), and 121–141 (MLLG…AAVV). Positions 95 and 98 each coordinate Na(+).

Belongs to the fluoride channel Fluc/FEX (TC 1.A.43) family.

Its subcellular location is the cell inner membrane. The catalysed reaction is fluoride(in) = fluoride(out). Its activity is regulated as follows. Na(+) is not transported, but it plays an essential structural role and its presence is essential for fluoride channel function. In terms of biological role, fluoride-specific ion channel. Important for reducing fluoride concentration in the cell, thus reducing its toxicity. The protein is Fluoride-specific ion channel FluC of Rhodopirellula baltica (strain DSM 10527 / NCIMB 13988 / SH1).